Reading from the N-terminus, the 460-residue chain is Vitamin K-dependent protein C (460 aa).

A signal peptide spans 1-18 (MWQFRVFLLLMSTWGISS). The propeptide occupies 19–41 (IPAHPDPVFSSSEHAHQVLRVRR). The Gla domain maps to 42–87 (ANSFLEEMRPGSLERECMEEICDFEEAQEIFQNVEDTLAFWIKYFD). 4-carboxyglutamate occurs at positions 47, 48, 55, 57, 60, 61, 66, 67, 70, and 76. Residues cysteine 58 and cysteine 63 are joined by a disulfide bond. Cystine bridges form between cysteine 91–cysteine 110, cysteine 100–cysteine 105, cysteine 104–cysteine 119, cysteine 121–cysteine 130, cysteine 139–cysteine 150, cysteine 146–cysteine 159, cysteine 161–cysteine 174, cysteine 182–cysteine 319, and cysteine 238–cysteine 254. 2 EGF-like domains span residues 96-131 (LDHQCDSPCCGHGTCIDGIGSFSCSCDKGWEGKFCQ) and 135-175 (RFQD…MRCK). At aspartate 112 the chain carries (3R)-3-hydroxyaspartate. The Peptidase S1 domain maps to 213 to 449 (VNGTLTKQGD…YLKWIHSYIG (237 aa)). The N-linked (GlcNAc...) asparagine glycan is linked to asparagine 214. The Charge relay system role is filled by histidine 253. Asparagine 290 carries an N-linked (GlcNAc...) asparagine glycan. Catalysis depends on aspartate 299, which acts as the Charge relay system. The N-linked (GlcNAc...) asparagine glycan is linked to asparagine 354. Intrachain disulfides connect cysteine 372–cysteine 386 and cysteine 397–cysteine 425. Serine 401 acts as the Charge relay system in catalysis.

Belongs to the peptidase S1 family. Synthesized as a single chain precursor, which is cleaved into a light chain and a heavy chain held together by a disulfide bond. The enzyme is then activated by thrombin, which cleaves a tetradecapeptide from the amino end of the heavy chain; this reaction, which occurs at the surface of endothelial cells, is strongly promoted by thrombomodulin. In terms of processing, the vitamin K-dependent, enzymatic carboxylation of some Glu residues allows the modified protein to bind calcium. The iron and 2-oxoglutarate dependent 3-hydroxylation of aspartate and asparagine is (R) stereospecific within EGF domains. Plasma; synthesized in the liver.

The protein resides in the secreted. Its subcellular location is the golgi apparatus. It is found in the endoplasmic reticulum. The catalysed reaction is Degradation of blood coagulation factors Va and VIIIa.. In terms of biological role, protein C is a vitamin K-dependent serine protease that regulates blood coagulation by inactivating factors Va and VIIIa in the presence of calcium ions and phospholipids. Exerts a protective effect on the endothelial cell barrier function. In Mus musculus (Mouse), this protein is Vitamin K-dependent protein C (Proc).